A 214-amino-acid polypeptide reads, in one-letter code: Thymidylate kinase (214 aa).

Residue 10–17 (GPDGAGKT) coordinates ATP.

This sequence belongs to the thymidylate kinase family.

The enzyme catalyses dTMP + ATP = dTDP + ADP. Its function is as follows. Phosphorylation of dTMP to form dTDP in both de novo and salvage pathways of dTTP synthesis. The protein is Thymidylate kinase of Lacticaseibacillus casei (strain BL23) (Lactobacillus casei).